Here is a 497-residue protein sequence, read N- to C-terminus: PHD finger protein 10 (497 aa).

Positions 1-13 (MTAAGPGAAPSPG) are enriched in low complexity. A disordered region spans residues 1–61 (MTAAGPGAAP…SSRSCETSSQ (61 aa)). A phosphoserine mark is found at serine 11, serine 35, and serine 49. The essential to induce neural progenitor proliferation stretch occupies residues 88–184 (MLQEQVSEYL…HYKEYSQMQQ (97 aa)). Residues 88–294 (MLQEQVSEYL…PPLDPELPAL (207 aa)) are SAY. Residue lysine 240 forms a Glycyl lysine isopeptide (Lys-Gly) (interchain with G-Cter in SUMO2) linkage. Phosphoserine is present on serine 269. Low complexity predominate over residues 284–295 (EPPLDPELPALD). The interval 284–368 (EPPLDPELPA…RSVLSKSAPG (85 aa)) is disordered. The essential to induce neural progenitor proliferation stretch occupies residues 291–333 (LPALDSDGDSDDGEDGGGDEKRKNKGTSDSSSGNVSEGDSPPD). 4 positions are modified to phosphoserine: serine 296, serine 300, serine 326, and serine 330. Positions 296-307 (SDGDSDDGEDGG) are enriched in acidic residues. Over residues 317-327 (TSDSSSGNVSE) the composition is skewed to polar residues. Residues 337–358 (DTFHGRQKSKDKMATPRKDGSK) show a composition bias toward basic and acidic residues. The PHD-type 1; degenerate zinc finger occupies 378–435 (LCGICLKGKESNKKGKAESLIHCSQCDNSGHPSCLDMTMELVSMIKTYPWQCMECKTC). Lysine 384 participates in a covalent cross-link: Glycyl lysine isopeptide (Lys-Gly) (interchain with G-Cter in SUMO2). The PHD-type 2; degenerate zinc-finger motif lies at 437-480 (ICGQPHHEEEMMFCDVCDRGYHTFCVGLGAIPSGRWICDCCQRA).

Belongs to the SAYP family. Component of neural progenitors-specific chromatin remodeling complex (npBAF complex) composed of at least, ARID1A/BAF250A or ARID1B/BAF250B, SMARCD1/BAF60A, SMARCD3/BAF60C, SMARCA2/BRM/BAF190B, SMARCA4/BRG1/BAF190A, SMARCB1/BAF47, SMARCC1/BAF155, SMARCE1/BAF57, SMARCC2/BAF170, PHF10/BAF45A, ACTL6A/BAF53A and actin. Interacts with ACTL6A/BAF53A, SMARCA2/BRM/BAF190B, SMARCA4/BRG1/BAF190A and PBRM1/BAF180. Widely expressed. Expressed selectively in neural stem and progenitor cells (at protein level).

The protein localises to the nucleus. Involved in transcription activity regulation by chromatin remodeling. Belongs to the neural progenitors-specific chromatin remodeling complex (npBAF complex) and is required for the proliferation of neural progenitors. During neural development a switch from a stem/progenitor to a post-mitotic chromatin remodeling mechanism occurs as neurons exit the cell cycle and become committed to their adult state. The transition from proliferating neural stem/progenitor cells to post-mitotic neurons requires a switch in subunit composition of the npBAF and nBAF complexes. As neural progenitors exit mitosis and differentiate into neurons, npBAF complexes which contain ACTL6A/BAF53A and PHF10/BAF45A, are exchanged for homologous alternative ACTL6B/BAF53B and DPF1/BAF45B or DPF3/BAF45C subunits in neuron-specific complexes (nBAF). The npBAF complex is essential for the self-renewal/proliferative capacity of the multipotent neural stem cells. The nBAF complex along with CREST plays a role regulating the activity of genes essential for dendrite growth. This is PHD finger protein 10 (Phf10) from Mus musculus (Mouse).